Consider the following 85-residue polypeptide: DNA-directed RNA polymerase subunit Rpo11 (85 aa).

Belongs to the archaeal Rpo11/eukaryotic RPB11/RPC19 RNA polymerase subunit family. In terms of assembly, part of the RNA polymerase complex.

Its subcellular location is the cytoplasm. The catalysed reaction is RNA(n) + a ribonucleoside 5'-triphosphate = RNA(n+1) + diphosphate. Functionally, DNA-dependent RNA polymerase (RNAP) catalyzes the transcription of DNA into RNA using the four ribonucleoside triphosphates as substrates. This Methanothermobacter thermautotrophicus (strain ATCC 29096 / DSM 1053 / JCM 10044 / NBRC 100330 / Delta H) (Methanobacterium thermoautotrophicum) protein is DNA-directed RNA polymerase subunit Rpo11.